A 137-amino-acid polypeptide reads, in one-letter code: MLSPKRTKFRKQQRGRMRGNANSGNKISFGQYALQALEPSWITSRQIEAARRAMTRYIRRGGKIWIRVFPDKPVTMRAAETRMGSGKGAPEYWVAVVKPGRIMFELGGVVEEIAREAMRLASFKLPIKTRFIVREED.

The span at 1–17 (MLSPKRTKFRKQQRGRM) shows a compositional bias: basic residues. The disordered stretch occupies residues 1 to 24 (MLSPKRTKFRKQQRGRMRGNANSG).

Belongs to the universal ribosomal protein uL16 family. Part of the 50S ribosomal subunit.

In terms of biological role, binds 23S rRNA and is also seen to make contacts with the A and possibly P site tRNAs. This chain is Large ribosomal subunit protein uL16, found in Trichodesmium erythraeum (strain IMS101).